A 420-amino-acid chain; its full sequence is Multiple sugar-binding protein (420 aa).

An N-terminal signal peptide occupies residues 1–22 (MKWYKKIGLLGIVGLTSVLLAA). Cys23 carries N-palmitoyl cysteine lipidation. Cys23 carries the S-diacylglycerol cysteine lipid modification.

This sequence belongs to the bacterial solute-binding protein 1 family.

It is found in the cell membrane. Its function is as follows. Involved in a binding protein-dependent transport system responsible for the uptake of melibiose, raffinose and isomaltotriose. This chain is Multiple sugar-binding protein, found in Streptococcus mutans serotype c (strain ATCC 700610 / UA159).